A 235-amino-acid chain; its full sequence is Carboxy-S-adenosyl-L-methionine synthase (235 aa).

Residues Tyr35, 60–62, 83–84, Asn124, and Arg191 contribute to the S-adenosyl-L-methionine site; these read GCS and DN.

It belongs to the class I-like SAM-binding methyltransferase superfamily. Cx-SAM synthase family. As to quaternary structure, homodimer.

The enzyme catalyses prephenate + S-adenosyl-L-methionine = carboxy-S-adenosyl-L-methionine + 3-phenylpyruvate + H2O. Functionally, catalyzes the conversion of S-adenosyl-L-methionine (SAM) to carboxy-S-adenosyl-L-methionine (Cx-SAM). This Campylobacter jejuni subsp. jejuni serotype O:6 (strain 81116 / NCTC 11828) protein is Carboxy-S-adenosyl-L-methionine synthase.